We begin with the raw amino-acid sequence, 177 residues long: Small ribosomal subunit protein uS13 (177 aa).

Residues 132–145 are compositionally biased toward basic residues; the sequence is GVRHKRGQKVRGQR. The tract at residues 132–177 is disordered; that stretch reads GVRHKRGQKVRGQRTKSTGRTEGTIGVNVEAIKEEQAEDAAAEDDE. Residues 167–177 show a composition bias toward acidic residues; the sequence is QAEDAAAEDDE.

Belongs to the universal ribosomal protein uS13 family. In terms of assembly, part of the 30S ribosomal subunit. Forms a loose heterodimer with protein S19. Forms two bridges to the 50S subunit in the 70S ribosome.

Located at the top of the head of the 30S subunit, it contacts several helices of the 16S rRNA. In the 70S ribosome it contacts the 23S rRNA (bridge B1a) and protein L5 of the 50S subunit (bridge B1b), connecting the 2 subunits; these bridges are implicated in subunit movement. The protein is Small ribosomal subunit protein uS13 of Haloarcula marismortui (strain ATCC 43049 / DSM 3752 / JCM 8966 / VKM B-1809) (Halobacterium marismortui).